The sequence spans 156 residues: Small ribosomal subunit protein uS7 (156 aa).

It belongs to the universal ribosomal protein uS7 family. In terms of assembly, part of the 30S ribosomal subunit. Contacts proteins S9 and S11.

One of the primary rRNA binding proteins, it binds directly to 16S rRNA where it nucleates assembly of the head domain of the 30S subunit. Is located at the subunit interface close to the decoding center, probably blocks exit of the E-site tRNA. The polypeptide is Small ribosomal subunit protein uS7 (Anaeromyxobacter dehalogenans (strain 2CP-C)).